A 223-amino-acid chain; its full sequence is Virulence transcriptional regulatory protein PhoP (223 aa).

Residues 2-116 (RVLVVEDNAL…EVMARMQALM (115 aa)) enclose the Response regulatory domain. Aspartate 51 is modified (4-aspartylphosphate). Positions 124 to 222 (SQVISLPPFQ…VRGQGYLFEL (99 aa)) form a DNA-binding region, ompR/PhoB-type.

In terms of processing, phosphorylated by PhoQ.

Its subcellular location is the cytoplasm. Member of the two-component regulatory system PhoQ/PhoP involved in virulence and adaptation to low Mg(2+) environments. Necessary for resistance to killing by polymorphonuclear leukocytes (PMNs) and cationic antimicrobial peptides (CAMP) they produce. The chain is Virulence transcriptional regulatory protein PhoP (phoP) from Shigella flexneri.